The chain runs to 354 residues: V-type proton ATPase subunit C (354 aa).

This sequence belongs to the V-ATPase C subunit family. As to quaternary structure, V-ATPase is a heteromultimeric enzyme composed of a peripheral catalytic V1 complex (components A to H) attached to an integral membrane V0 proton pore complex (components: a, c, c', c'' and d).

It localises to the vacuole membrane. Subunit of the peripheral V1 complex of vacuolar ATPase. Subunit C is necessary for the assembly of the catalytic sector of the enzyme and is likely to have a specific function in its catalytic activity. V-ATPase is responsible for acidifying a variety of intracellular compartments in eukaryotic cells. In Hordeum vulgare (Barley), this protein is V-type proton ATPase subunit C (VATC).